We begin with the raw amino-acid sequence, 116 residues long: Non-specific lipid-transfer protein 8 (116 aa).

The first 24 residues, M1 to S24, serve as a signal peptide directing secretion. Intrachain disulfides connect C28/C76, C38/C53, C54/C98, and C74/C112.

Belongs to the plant LTP family.

Functionally, plant non-specific lipid-transfer proteins transfer phospholipids as well as galactolipids across membranes. May play a role in wax or cutin deposition in the cell walls of expanding epidermal cells and certain secretory tissues. This chain is Non-specific lipid-transfer protein 8 (LTP8), found in Arabidopsis thaliana (Mouse-ear cress).